A 521-amino-acid polypeptide reads, in one-letter code: SET and MYND domain-containing protein DDB_G0292140 (521 aa).

The tract at residues 1–101 (MDGVIESPSN…KIKKSKKSIK (101 aa)) is disordered. The span at 12 to 55 (TIKISPSTSDSSTTTPIITTPPTQSTATVTTKAAATTTTTEAST) shows a compositional bias: low complexity. The span at 56 to 65 (TPPPPQPTPT) shows a compositional bias: pro residues. A compositionally biased stretch (low complexity) spans 66–90 (PTQSTATVTKEVETTTETIPPIVTK). Positions 91–101 (GKIKKSKKSIK) are enriched in basic residues. The 285-residue stretch at 122–406 (WPIHVYSHPI…EGDELTISYI (285 aa)) folds into the SET domain. Residues C167, C170, C188, C191, C197, C201, H209, and C213 each contribute to the Zn(2+) site. An MYND-type zinc finger spans residues 167-213 (CQHCFLEVPLNQQILPTDFYMCEGCQRVGYCSANCRCIDYSQHRFEC). The tract at residues 442–521 (QTGTLEKDDD…QDHQNNDKSN (80 aa)) is disordered. Over residues 448-469 (KDDDDNDDEKEKMDEDDDEKDD) the composition is skewed to acidic residues. The segment covering 470 to 485 (DINNKNDKKSKYKSDG) has biased composition (basic and acidic residues). Residues 486 to 495 (STDDEEDEDN) are compositionally biased toward acidic residues. Positions 497-514 (NNKNNNKNKNNNSNNQDH) are enriched in low complexity.

Belongs to the class V-like SAM-binding methyltransferase superfamily.

In terms of biological role, probable methyltransferase. This is SET and MYND domain-containing protein DDB_G0292140 from Dictyostelium discoideum (Social amoeba).